Here is a 656-residue protein sequence, read N- to C-terminus: Rab proteins geranylgeranyltransferase component A 2 (656 aa).

2 disordered regions span residues 188–209 (MHTV…EDKA) and 609–656 (PPPN…HLQN). Positions 639–656 (ESSEESKNLESPEKHLQN) are enriched in basic and acidic residues. Position 649 is a phosphoserine (Ser-649).

This sequence belongs to the Rab GDI family. As to quaternary structure, monomer. Heterotrimer composed of RABGGTA, RABGGTB and CHML; within this trimer, RABGGTA and RABGGTB form the catalytic component B, while CHML (component A) mediates Rab protein binding. Interacts with RAB1A, RAB7A and RAB27A, but has much lower affinity for RAB1A, RAB7A and RAB27A than CHM. Interacts with the non-phosphorylated forms of RAB3A, RAB3B, RAB3C, RAB3D, RAB5B, RAB5C, RAB8A, RAB8B, RAB10, RAB12, RAB35, and RAB43.

The protein localises to the cytoplasm. The protein resides in the cytosol. In terms of biological role, substrate-binding subunit (component A) of the Rab geranylgeranyltransferase (GGTase) complex. Binds unprenylated Rab proteins and presents the substrate peptide to the catalytic component B. The component A is thought to be regenerated by transferring its prenylated Rab back to the donor membrane. Less effective than CHM in supporting prenylation of Rab3 family. The protein is Rab proteins geranylgeranyltransferase component A 2 (CHML) of Homo sapiens (Human).